The chain runs to 588 residues: Lamin-B1 (588 aa).

Residues 1–12 (MATATPVQQQRA) are compositionally biased toward polar residues. The segment at 1-34 (MATATPVQQQRAGSRASAPATPLSPTRLSRLQEK) is disordered. The residue at position 2 (Ala2) is an N-acetylalanine. The interval 2 to 35 (ATATPVQQQRAGSRASAPATPLSPTRLSRLQEKE) is head. Phosphothreonine occurs at positions 3 and 5. Position 15 is an omega-N-methylarginine (Arg15). Ser17 is subject to Phosphoserine. Thr21 is subject to Phosphothreonine. Ser24 bears the Phosphoserine mark. At Thr26 the chain carries Phosphothreonine. The residue at position 29 (Ser29) is a Phosphoserine. In terms of domain architecture, IF rod spans 33 to 389 (EKEELRELND…KLLEGEEERL (357 aa)). The segment at 36 to 70 (ELRELNDRLAVYIDKVRSLETENSALQLQVTEREE) is coil 1A. The tract at residues 71-82 (VRGRELTGLKAL) is linker 1. Positions 83–216 (YETELADARR…EFRKNMYEEE (134 aa)) are coil 1B. Lys103 is covalently cross-linked (Glycyl lysine isopeptide (Lys-Gly) (interchain with G-Cter in SUMO2)). Residue Lys112 is modified to N6-acetyllysine. Residue Lys124 forms a Glycyl lysine isopeptide (Lys-Gly) (interchain with G-Cter in SUMO2) linkage. Ser127 bears the Phosphoserine mark. Lys146 is covalently cross-linked (Glycyl lysine isopeptide (Lys-Gly) (interchain with G-Cter in SUMO2)). Lys158 carries the N6-acetyllysine; alternate modification. Lys158 is covalently cross-linked (Glycyl lysine isopeptide (Lys-Gly) (interchain with G-Cter in SUMO2); alternate). Ser159 carries the phosphoserine modification. Residue Lys182 forms a Glycyl lysine isopeptide (Lys-Gly) (interchain with G-Cter in SUMO2) linkage. Ser201 and Ser233 each carry phosphoserine. A linker 2 region spans residues 217–244 (INETRRKHETRLVEVDSGRQIEYEYKLA). Glycyl lysine isopeptide (Lys-Gly) (interchain with G-Cter in SUMO2) cross-links involve residues Lys242 and Lys262. Residues 245-387 (QALHEMREQH…YRKLLEGEEE (143 aa)) form a coil 2 region. Lys272 carries the post-translational modification N6-acetyllysine; alternate. Lys272 participates in a covalent cross-link: Glycyl lysine isopeptide (Lys-Gly) (interchain with G-Cter in SUMO2); alternate. Residues Ser279 and Ser303 each carry the phosphoserine modification. Residue Lys313 forms a Glycyl lysine isopeptide (Lys-Gly) (interchain with G-Cter in SUMO2) linkage. Position 331 is an N6-acetyllysine; alternate (Lys331). A Glycyl lysine isopeptide (Lys-Gly) (interchain with G-Cter in SUMO2); alternate cross-link involves residue Lys331. Phosphoserine is present on residues Ser376 and Ser394. Positions 388–588 (RLKLSPSPSS…RASNKSCAIM (201 aa)) are tail. Low complexity predominate over residues 391–410 (LSPSPSSRVTVSRASSSRSV). A disordered region spans residues 391–433 (LSPSPSSRVTVSRASSSRSVRTTRGKRKRVDVEESEASSSVSI). Thr400 carries an O-linked (GlcNAc) threonine glycan. At Arg414 the chain carries Omega-N-methylarginine. The short motif at 416–421 (KRKRVD) is the Nuclear localization signal element. The 117-residue stretch at 431–547 (VSISHSASAT…EEVAQRSTVF (117 aa)) folds into the LTD domain. Lys484 is modified (N6-acetyllysine). Residue Lys533 forms a Glycyl lysine isopeptide (Lys-Gly) (interchain with G-Cter in SUMO2) linkage. A Phosphoserine modification is found at Ser535. Lys548 participates in a covalent cross-link: Glycyl lysine isopeptide (Lys-Gly) (interchain with G-Cter in SUMO2). Cys585 is subject to Cysteine methyl ester. The S-farnesyl cysteine moiety is linked to residue Cys585. Positions 586–588 (AIM) are cleaved as a propeptide — removed in mature form.

Belongs to the intermediate filament family. Homodimer. Lamin dimers then assemble into dimeric head-to-tail polymers. Ultimately, two head-to-tail polymers assemble laterally into a protofilament with a uniformly shaped rod of 3.5 nm in diameter. Interacts with SPAG4 and SEPT12. Post-translationally, B-type lamins undergo a series of modifications, such as farnesylation and phosphorylation. Increased phosphorylation of the lamins occurs before envelope disintegration and probably plays a role in regulating lamin associations. In terms of processing, phosphorylation plays a key role in lamin organization, subcellular localization and nuclear envelope disintegration. Phosphorylation by CDK1 at Ser-24 and Ser-394 at the onset of mitosis drives lamin disassembly and nuclear envelope breakdown.

Its subcellular location is the nucleus lamina. Lamins are intermediate filament proteins that assemble into a filamentous meshwork, and which constitute the major components of the nuclear lamina, a fibrous layer on the nucleoplasmic side of the inner nuclear membrane. Lamins provide a framework for the nuclear envelope, bridging the nuclear envelope and chromatin, thereby playing an important role in nuclear assembly, chromatin organization, nuclear membrane and telomere dynamics. The structural integrity of the lamina is strictly controlled by the cell cycle, as seen by the disintegration and formation of the nuclear envelope in prophase and telophase, respectively. The sequence is that of Lamin-B1 (Lmnb1) from Mus musculus (Mouse).